A 90-amino-acid chain; its full sequence is Probable Fe(2+)-trafficking protein (90 aa).

This sequence belongs to the Fe(2+)-trafficking protein family.

Functionally, could be a mediator in iron transactions between iron acquisition and iron-requiring processes, such as synthesis and/or repair of Fe-S clusters in biosynthetic enzymes. This chain is Probable Fe(2+)-trafficking protein, found in Paraburkholderia xenovorans (strain LB400).